Reading from the N-terminus, the 700-residue chain is Phosphoribosylformylglycinamidine synthase subunit PurL (700 aa).

The active site involves His34. Tyr37 provides a ligand contact to ATP. Residue Glu79 participates in Mg(2+) binding. Substrate is bound by residues 80–83 (SHNH) and Arg102. Catalysis depends on His81, which acts as the Proton acceptor. Asp103 provides a ligand contact to Mg(2+). Residue Gln227 participates in substrate binding. Asp255 contacts Mg(2+). Residue 299–301 (ESQ) participates in substrate binding. Asp476 and Gly513 together coordinate ATP. Asn514 lines the Mg(2+) pocket. Position 516 (Ser516) interacts with substrate.

Belongs to the FGAMS family. As to quaternary structure, monomer. Part of the FGAM synthase complex composed of 1 PurL, 1 PurQ and 2 PurS subunits.

It localises to the cytoplasm. It catalyses the reaction N(2)-formyl-N(1)-(5-phospho-beta-D-ribosyl)glycinamide + L-glutamine + ATP + H2O = 2-formamido-N(1)-(5-O-phospho-beta-D-ribosyl)acetamidine + L-glutamate + ADP + phosphate + H(+). Its pathway is purine metabolism; IMP biosynthesis via de novo pathway; 5-amino-1-(5-phospho-D-ribosyl)imidazole from N(2)-formyl-N(1)-(5-phospho-D-ribosyl)glycinamide: step 1/2. Functionally, part of the phosphoribosylformylglycinamidine synthase complex involved in the purines biosynthetic pathway. Catalyzes the ATP-dependent conversion of formylglycinamide ribonucleotide (FGAR) and glutamine to yield formylglycinamidine ribonucleotide (FGAM) and glutamate. The FGAM synthase complex is composed of three subunits. PurQ produces an ammonia molecule by converting glutamine to glutamate. PurL transfers the ammonia molecule to FGAR to form FGAM in an ATP-dependent manner. PurS interacts with PurQ and PurL and is thought to assist in the transfer of the ammonia molecule from PurQ to PurL. The chain is Phosphoribosylformylglycinamidine synthase subunit PurL from Halobacterium salinarum (strain ATCC 29341 / DSM 671 / R1).